We begin with the raw amino-acid sequence, 347 residues long: NADH-ubiquinone oxidoreductase chain 2 (347 aa).

10 helical membrane-spanning segments follow: residues 13-33, 55-75, 96-116, 122-142, 151-171, 178-198, 199-219, 237-257, 277-297, and 326-346; these read VFTG…WLGL, AAIK…MAIL, LMIV…FWVP, VPLT…ISIM, TNIL…GGLN, ILAY…PYNP, NITI…FLIL, LTWL…LPPL, IAPT…ARLI, and LPTL…ILSI.

The protein belongs to the complex I subunit 2 family. In terms of assembly, core subunit of respiratory chain NADH dehydrogenase (Complex I) which is composed of 45 different subunits. Interacts with TMEM242.

It localises to the mitochondrion inner membrane. It carries out the reaction a ubiquinone + NADH + 5 H(+)(in) = a ubiquinol + NAD(+) + 4 H(+)(out). In terms of biological role, core subunit of the mitochondrial membrane respiratory chain NADH dehydrogenase (Complex I) which catalyzes electron transfer from NADH through the respiratory chain, using ubiquinone as an electron acceptor. Essential for the catalytic activity and assembly of complex I. The protein is NADH-ubiquinone oxidoreductase chain 2 of Pongo pygmaeus (Bornean orangutan).